The primary structure comprises 418 residues: Glutamate-1-semialdehyde 2,1-aminomutase (418 aa).

N6-(pyridoxal phosphate)lysine is present on K262.

It belongs to the class-III pyridoxal-phosphate-dependent aminotransferase family. HemL subfamily. Pyridoxal 5'-phosphate is required as a cofactor.

Its subcellular location is the cytoplasm. It carries out the reaction (S)-4-amino-5-oxopentanoate = 5-aminolevulinate. It functions in the pathway porphyrin-containing compound metabolism; protoporphyrin-IX biosynthesis; 5-aminolevulinate from L-glutamyl-tRNA(Glu): step 2/2. The chain is Glutamate-1-semialdehyde 2,1-aminomutase (hemL) from Archaeoglobus fulgidus (strain ATCC 49558 / DSM 4304 / JCM 9628 / NBRC 100126 / VC-16).